Here is a 953-residue protein sequence, read N- to C-terminus: Anion exchange protein 4 (953 aa).

The disordered stretch occupies residues 20 to 41 (SEQLDGDLGPGSGLDGPSDIDN). Transmembrane regions (helical) follow at residues 385-405 (AVLY…GLLG), 413-433 (GVLE…LMAG), 470-490 (VGIW…SLLV), and 501-521 (FCAL…LNLI). Residues 385–953 (AVLYIYLATV…KAPEINISVN (569 aa)) are membrane (anion exchange). N546 and N570 each carry an N-linked (GlcNAc...) asparagine glycan. 7 helical membrane-spanning segments follow: residues 594 to 614 (VPDI…CAIA), 635 to 655 (FSSV…GLAT), 682 to 702 (PWWL…LIFM), 728 to 748 (LFCV…WYVS), 785 to 805 (GLVV…LKFI), 807 to 827 (MPVL…SMQF), and 869 to 889 (LWVI…LGLV). A compositionally biased stretch (basic and acidic residues) spans 916–927 (KTIPENRPEPEH). Residues 916–938 (KTIPENRPEPEHLFSGNDSENSE) form a disordered region. N932 and N949 each carry an N-linked (GlcNAc...) asparagine glycan.

This sequence belongs to the anion exchanger (TC 2.A.31) family. As to expression, expressed in kidney and gastrointestinal tract. In kidney, it is highly expressed in the cortex, expressed at intermediate level in the outer medulla and not expressed in the inner medulla. It is expressed in the cecum, while it is absent in other segments of gastrointestinal tract. Highly expressed in the cortical collecting duct (CCD). Expressed in both alpha-intercalated cells and beta-intercalated cells in the CCD (at protein level).

Its subcellular location is the basolateral cell membrane. The catalysed reaction is 2 hydrogencarbonate(out) + chloride(in) + Na(+)(out) = 2 hydrogencarbonate(in) + chloride(out) + Na(+)(in). It catalyses the reaction K(+)(in) + 2 hydrogencarbonate(in) + chloride(out) = K(+)(out) + 2 hydrogencarbonate(out) + chloride(in). The enzyme catalyses Li(+)(in) + 2 hydrogencarbonate(in) + chloride(out) = Li(+)(out) + 2 hydrogencarbonate(out) + chloride(in). It carries out the reaction Rb(+)(in) + 2 hydrogencarbonate(in) + chloride(out) = Rb(+)(out) + 2 hydrogencarbonate(out) + chloride(in). The catalysed reaction is Cs(+)(in) + 2 hydrogencarbonate(in) + chloride(out) = Cs(+)(out) + 2 hydrogencarbonate(out) + chloride(in). 4,4'-diisothiocyanatodihydrostilbene-2,2'- disulfonic acid (H2DIDS) potently inhibits chloride/hydrogencarbonate antiporter activity with 50% inhibition at about 5 uM. Completely inhibits chloride/hydrogencarbonate antiporter activity at 200 uM of 4,4'-diisothiocyano-trans-stilbene-2,2'-disulfonic acid (DIDS). Its function is as follows. Electroneutral Cl(-)/HCO3(-) antiporter that favors chloride ion entry and efflux of hydrogencarbonate and sodium ion across the basolateral membrane and may participate in salivary secretion. Also mediates Cl(-)/HCO3(-) exchange activity in the presence of K(+) as well as Cs(+), Li(+), and Rb(+). Does not contribute to Cl(-)/HCO3(-) exchanger in the apical membrane of the upper villous epithelium. The chain is Anion exchange protein 4 from Rattus norvegicus (Rat).